The primary structure comprises 347 residues: Histone deacetylase 11 (347 aa).

The interval 14–318 (KRWPIVYSPR…ARIIADSILN (305 aa)) is histone deacetylase. Histidine 143 is an active-site residue.

The protein belongs to the histone deacetylase family. Interacts with HDAC6.

The protein localises to the nucleus. It carries out the reaction N(6)-acetyl-L-lysyl-[histone] + H2O = L-lysyl-[histone] + acetate. Functionally, responsible for the deacetylation of lysine residues on the N-terminal part of the core histones (H2A, H2B, H3 and H4). Histone deacetylation gives a tag for epigenetic repression and plays an important role in transcriptional regulation, cell cycle progression and developmental events. Histone deacetylases act via the formation of large multiprotein complexes. This Mus musculus (Mouse) protein is Histone deacetylase 11 (Hdac11).